The following is a 169-amino-acid chain: Crossover junction endodeoxyribonuclease RuvC (169 aa).

Residues Asp11, Glu71, and Asp143 contribute to the active site. Residues Asp11, Glu71, and Asp143 each contribute to the Mg(2+) site.

Belongs to the RuvC family. In terms of assembly, homodimer which binds Holliday junction (HJ) DNA. The HJ becomes 2-fold symmetrical on binding to RuvC with unstacked arms; it has a different conformation from HJ DNA in complex with RuvA. In the full resolvosome a probable DNA-RuvA(4)-RuvB(12)-RuvC(2) complex forms which resolves the HJ. The cofactor is Mg(2+).

The protein localises to the cytoplasm. It carries out the reaction Endonucleolytic cleavage at a junction such as a reciprocal single-stranded crossover between two homologous DNA duplexes (Holliday junction).. The RuvA-RuvB-RuvC complex processes Holliday junction (HJ) DNA during genetic recombination and DNA repair. Endonuclease that resolves HJ intermediates. Cleaves cruciform DNA by making single-stranded nicks across the HJ at symmetrical positions within the homologous arms, yielding a 5'-phosphate and a 3'-hydroxyl group; requires a central core of homology in the junction. The consensus cleavage sequence is 5'-(A/T)TT(C/G)-3'. Cleavage occurs on the 3'-side of the TT dinucleotide at the point of strand exchange. HJ branch migration catalyzed by RuvA-RuvB allows RuvC to scan DNA until it finds its consensus sequence, where it cleaves and resolves the cruciform DNA. This Rhizobium leguminosarum bv. trifolii (strain WSM2304) protein is Crossover junction endodeoxyribonuclease RuvC.